We begin with the raw amino-acid sequence, 136 residues long: 1,4-dihydroxy-2-naphthoyl-CoA hydrolase (136 aa).

The active site involves Asp-16.

This sequence belongs to the 4-hydroxybenzoyl-CoA thioesterase family. DHNA-CoA hydrolase subfamily.

It carries out the reaction 1,4-dihydroxy-2-naphthoyl-CoA + H2O = 1,4-dihydroxy-2-naphthoate + CoA + H(+). The protein operates within cofactor biosynthesis; phylloquinone biosynthesis. Its pathway is quinol/quinone metabolism; 1,4-dihydroxy-2-naphthoate biosynthesis; 1,4-dihydroxy-2-naphthoate from chorismate: step 7/7. Its function is as follows. Catalyzes the hydrolysis of 1,4-dihydroxy-2-naphthoyl-CoA (DHNA-CoA) to 1,4-dihydroxy-2-naphthoate (DHNA), a reaction involved in phylloquinone (vitamin K1) biosynthesis. The polypeptide is 1,4-dihydroxy-2-naphthoyl-CoA hydrolase (Synechococcus sp. (strain ATCC 27144 / PCC 6301 / SAUG 1402/1) (Anacystis nidulans)).